Reading from the N-terminus, the 96-residue chain is Seed trypsin/chymotrypsin inhibitor IVA (96 aa).

The N-terminal stretch at 1–10 (LSFAANVVNA) is a signal peptide. Positions 11–24 (RFDSTSFITQVLSN) are excised as a propeptide. Disulfide bonds link C32–C85, C33–C48, C36–C81, C38–C46, C55–C62, C59–C74, and C64–C72. Positions 88–96 (SEVEEVIKN) are cleaved as a propeptide — removed in PSTI I.

The protein belongs to the Bowman-Birk serine protease inhibitor family. As to expression, seed.

Its function is as follows. Inhibitor of trypsin and of chymotrypsin. May function as a natural phytochemical defense against predators. The sequence is that of Seed trypsin/chymotrypsin inhibitor IVA (TI1236) from Pisum sativum (Garden pea).